Reading from the N-terminus, the 413-residue chain is MKALSSSSPILGASQPATATALIARSGRSEWQSSCAILTSKVISQEESESLPVPPVSGGVDHLNGHNSAAARVPGMNLVPIEKSDSNPLVPQHRHNPLKPLSMTDLSPAPMHGSNLRVAYQGVPGAYSEAAAGKAYPNCQAIPCDQFEVAFQAVELWIADRAVLPVENSLGGSIHRNYDLLLRHRLHIVGEVQLPVHHCLLALPGVRKEFLTRVISHPQGLAQCEHTLTKLGLNVAREAVDDTAGAAEFIASNNLRDTAAIASARAAEIYGLEILEDGIQDDVSNVTRFVMLAREPIIPRTDRPFKTSIVFAHEKGTSVLFKVLSAFAFRDISLTKIESRPNHNRPIRVVDDANVGTAKHFEYMFYVDFEASMAEARAQNALAEVQEFTSFLRVLGSYPMDMTPWSPTSSTSS.

A chloroplast-targeting transit peptide spans 1 to 44 (MKALSSSSPILGASQPATATALIARSGRSEWQSSCAILTSKVIS). The Prephenate dehydratase domain occupies 117 to 294 (RVAYQGVPGA…NVTRFVMLAR (178 aa)). Positions 308–399 (SIVFAHEKGT…SFLRVLGSYP (92 aa)) constitute an ACT domain.

As to expression, expressed in roots, leaves, stems, flowers and siliques.

The protein resides in the plastid. It is found in the chloroplast stroma. The enzyme catalyses L-arogenate + H(+) = L-phenylalanine + CO2 + H2O. It catalyses the reaction prephenate + H(+) = 3-phenylpyruvate + CO2 + H2O. Its pathway is amino-acid biosynthesis; L-phenylalanine biosynthesis; L-phenylalanine from L-arogenate: step 1/1. The protein operates within amino-acid biosynthesis; L-phenylalanine biosynthesis; phenylpyruvate from prephenate: step 1/1. Converts the prephenate produced from the shikimate-chorismate pathway into phenylalanine. Dehydratase that uses arogenate and prephenate as substrates. Utilzes more efficiently arogenate than prephenate. This is Arogenate dehydratase/prephenate dehydratase 6, chloroplastic from Arabidopsis thaliana (Mouse-ear cress).